Consider the following 554-residue polypeptide: MGSGKVTFVALLLCLSVGVIAEDPYLYFNWNVTYGTIAPLGVPQQGILINGQFPGPRINCTSNNNIVVNVFNNLDEPFLFTWNGVQHRKNSWQDGTPGTMCPIMPGQNFTYRFQVKDQIGSYSYFPTTALHRAAGGYGALNVHSRALIPVPFDNPADEYNVFVGDWYNKGHKTLKKILDGGRTIGRPDGIIINGKSAKVGEAKEPLFTMEAGKTYRYRFCNLGMRSSVNIRFQGHPMKLVELEGSHTVQNIYDSLDLHVGQCLSVLVTADQEPKDYYLVVSSRFLKQALSSVAIIRYANGKGPASPELPTPPPENTEGIAWSMNQFRSFRWNLTASAARPNPQGSYHYGQINITRTIKIFNSMSQVGGKLRYGLNGISHTNGETPLKLVEYFGATNKAFKYDLMADEAPADPSKLTIATNVKNATYRNFVEIIFENHEKTIRTYHLDGYSFFAVAVEPGRWSPEKRKNYNLVDGLSRNNIQVYPNSWAAIMLTFDNAGMWNLRSEMWEKTYLGEQLYFSVLSPSRSLRDEYNIPDNHPLCGIVKGLSMPAPYKA.

An N-terminal signal peptide occupies residues 1–21; the sequence is MGSGKVTFVALLLCLSVGVIA. Plastocyanin-like domains lie at 22–143 and 196–296; these read EDPY…LNVH and SAKV…AIIR. 3 N-linked (GlcNAc...) asparagine glycosylation sites follow: asparagine 31, asparagine 59, and asparagine 108. Cysteine 101 and cysteine 540 are disulfide-bonded. N-linked (GlcNAc...) asparagine glycans are attached at residues asparagine 332, asparagine 352, and asparagine 423. The region spanning 411 to 521 is the Plastocyanin-like 3 domain; that stretch reads DPSKLTIATN…LGEQLYFSVL (111 aa).

It belongs to the multicopper oxidase family. As to expression, pollen.

Its subcellular location is the secreted. The protein resides in the extracellular space. Functionally, probable oxidoreductase that may be involved in pollen tube growth. This is L-ascorbate oxidase homolog from Nicotiana tabacum (Common tobacco).